The following is a 141-amino-acid chain: Large ribosomal subunit protein uL11 (141 aa).

The protein belongs to the universal ribosomal protein uL11 family. Part of the ribosomal stalk of the 50S ribosomal subunit. Interacts with L10 and the large rRNA to form the base of the stalk. L10 forms an elongated spine to which L12 dimers bind in a sequential fashion forming a multimeric L10(L12)X complex. In terms of processing, one or more lysine residues are methylated.

Functionally, forms part of the ribosomal stalk which helps the ribosome interact with GTP-bound translation factors. This is Large ribosomal subunit protein uL11 from Syntrophus aciditrophicus (strain SB).